The sequence spans 68 residues: Large ribosomal subunit protein bL31 (68 aa).

Cys-16, Cys-18, Cys-37, and Cys-40 together coordinate Zn(2+).

Belongs to the bacterial ribosomal protein bL31 family. Type A subfamily. Part of the 50S ribosomal subunit. Zn(2+) serves as cofactor.

Its function is as follows. Binds the 23S rRNA. This is Large ribosomal subunit protein bL31 from Acidithiobacillus ferrooxidans (strain ATCC 23270 / DSM 14882 / CIP 104768 / NCIMB 8455) (Ferrobacillus ferrooxidans (strain ATCC 23270)).